The primary structure comprises 146 residues: Snaclec stejaggregin-B subunit beta-2 (146 aa).

The signal sequence occupies residues 1–23; sequence MGRFIFVSFGLLVVFLSLSGSGA. Residues 32–143 form the C-type lectin domain; the sequence is YDLYCYRVFQ…CSQTYPFVCK (112 aa). Cystine bridges form between C53-C142 and C119-C134.

This sequence belongs to the snaclec family. In terms of assembly, heteromultimer; disulfide-linked. In terms of tissue distribution, expressed by the venom gland.

The protein resides in the secreted. Functionally, interferes with one step of hemostasis (modulation of platelet aggregation, or coagulation cascade, for example). The protein is Snaclec stejaggregin-B subunit beta-2 of Trimeresurus stejnegeri (Chinese green tree viper).